The chain runs to 360 residues: Phosphoserine aminotransferase (360 aa).

Arg-41 lines the L-glutamate pocket. Residues Trp-101, Thr-152, Asp-172, and Gln-195 each coordinate pyridoxal 5'-phosphate. Residue Lys-196 is modified to N6-(pyridoxal phosphate)lysine. Residue 237 to 238 coordinates pyridoxal 5'-phosphate; sequence NT.

The protein belongs to the class-V pyridoxal-phosphate-dependent aminotransferase family. SerC subfamily. In terms of assembly, homodimer. Pyridoxal 5'-phosphate serves as cofactor.

The protein localises to the cytoplasm. The enzyme catalyses O-phospho-L-serine + 2-oxoglutarate = 3-phosphooxypyruvate + L-glutamate. The catalysed reaction is 4-(phosphooxy)-L-threonine + 2-oxoglutarate = (R)-3-hydroxy-2-oxo-4-phosphooxybutanoate + L-glutamate. Its pathway is amino-acid biosynthesis; L-serine biosynthesis; L-serine from 3-phospho-D-glycerate: step 2/3. The protein operates within cofactor biosynthesis; pyridoxine 5'-phosphate biosynthesis; pyridoxine 5'-phosphate from D-erythrose 4-phosphate: step 3/5. In terms of biological role, catalyzes the reversible conversion of 3-phosphohydroxypyruvate to phosphoserine and of 3-hydroxy-2-oxo-4-phosphonooxybutanoate to phosphohydroxythreonine. In Paraburkholderia phymatum (strain DSM 17167 / CIP 108236 / LMG 21445 / STM815) (Burkholderia phymatum), this protein is Phosphoserine aminotransferase.